A 249-amino-acid polypeptide reads, in one-letter code: NAD kinase (249 aa).

Aspartate 45 acts as the Proton acceptor in catalysis. NAD(+)-binding positions include 45 to 46 (DG), arginine 50, 110 to 111 (NE), aspartate 138, and 149 to 154 (SGWGMS).

This sequence belongs to the NAD kinase family. The cofactor is a divalent metal cation.

It localises to the cytoplasm. The catalysed reaction is NAD(+) + ATP = ADP + NADP(+) + H(+). Involved in the regulation of the intracellular balance of NAD and NADP, and is a key enzyme in the biosynthesis of NADP. Catalyzes specifically the phosphorylation on 2'-hydroxyl of the adenosine moiety of NAD to yield NADP. This is NAD kinase from Saccharolobus solfataricus (strain ATCC 35092 / DSM 1617 / JCM 11322 / P2) (Sulfolobus solfataricus).